The chain runs to 299 residues: ATP phosphoribosyltransferase (299 aa).

It belongs to the ATP phosphoribosyltransferase family. Long subfamily. Requires Mg(2+) as cofactor.

Its subcellular location is the cytoplasm. It carries out the reaction 1-(5-phospho-beta-D-ribosyl)-ATP + diphosphate = 5-phospho-alpha-D-ribose 1-diphosphate + ATP. Its pathway is amino-acid biosynthesis; L-histidine biosynthesis; L-histidine from 5-phospho-alpha-D-ribose 1-diphosphate: step 1/9. With respect to regulation, feedback inhibited by histidine. Catalyzes the condensation of ATP and 5-phosphoribose 1-diphosphate to form N'-(5'-phosphoribosyl)-ATP (PR-ATP). Has a crucial role in the pathway because the rate of histidine biosynthesis seems to be controlled primarily by regulation of HisG enzymatic activity. This Shewanella woodyi (strain ATCC 51908 / MS32) protein is ATP phosphoribosyltransferase.